The sequence spans 189 residues: Calcyphosin (189 aa).

4 consecutive EF-hand domains span residues 21 to 56 (SGIQ…LGLV), 57 to 92 (LDTA…PMSQ), 93 to 128 (AREA…RTHP), and 136 to 172 (TEEQ…VSAS). Ca(2+)-binding residues include aspartate 34, aspartate 36, serine 38, serine 40, glutamate 45, aspartate 70, aspartate 72, serine 74, threonine 76, glutamate 81, aspartate 106, serine 108, aspartate 110, and aspartate 117. Phosphoserine; by PKA is present on serine 40.

As to quaternary structure, monomer. Does not form oligomers in the presence of calcium.

The protein localises to the cytoplasm. In terms of biological role, calcium-binding protein. May play a role in cellular signaling events (Potential). This Bos taurus (Bovine) protein is Calcyphosin (CAPS).